The chain runs to 431 residues: Gamma-glutamyl phosphate reductase (431 aa).

It belongs to the gamma-glutamyl phosphate reductase family.

It localises to the cytoplasm. The catalysed reaction is L-glutamate 5-semialdehyde + phosphate + NADP(+) = L-glutamyl 5-phosphate + NADPH + H(+). The protein operates within amino-acid biosynthesis; L-proline biosynthesis; L-glutamate 5-semialdehyde from L-glutamate: step 2/2. In terms of biological role, catalyzes the NADPH-dependent reduction of L-glutamate 5-phosphate into L-glutamate 5-semialdehyde and phosphate. The product spontaneously undergoes cyclization to form 1-pyrroline-5-carboxylate. The protein is Gamma-glutamyl phosphate reductase of Trichodesmium erythraeum (strain IMS101).